The chain runs to 477 residues: Glutamate--tRNA ligase (477 aa).

Residues 12–22 (PSPTGMFHVGG) carry the 'HIGH' region motif. Zn(2+) is bound by residues cysteine 106, cysteine 108, cysteine 128, and aspartate 130. The 'KMSKS' region motif lies at 238–242 (KLSKR). Lysine 241 is an ATP binding site.

It belongs to the class-I aminoacyl-tRNA synthetase family. Glutamate--tRNA ligase type 1 subfamily. As to quaternary structure, monomer. Zn(2+) is required as a cofactor.

Its subcellular location is the cytoplasm. It catalyses the reaction tRNA(Glu) + L-glutamate + ATP = L-glutamyl-tRNA(Glu) + AMP + diphosphate. Functionally, catalyzes the attachment of glutamate to tRNA(Glu) in a two-step reaction: glutamate is first activated by ATP to form Glu-AMP and then transferred to the acceptor end of tRNA(Glu). In Thermobifida fusca (strain YX), this protein is Glutamate--tRNA ligase.